A 273-amino-acid chain; its full sequence is Acetyl-coenzyme A carboxylase carboxyl transferase subunit alpha (273 aa).

Positions methionine 1 to glutamate 244 constitute a CoA carboxyltransferase C-terminal domain.

It belongs to the AccA family. In terms of assembly, acetyl-CoA carboxylase is a heterohexamer composed of biotin carboxyl carrier protein (AccB), biotin carboxylase (AccC) and two subunits each of ACCase subunit alpha (AccA) and ACCase subunit beta (AccD).

Its subcellular location is the cytoplasm. The enzyme catalyses N(6)-carboxybiotinyl-L-lysyl-[protein] + acetyl-CoA = N(6)-biotinyl-L-lysyl-[protein] + malonyl-CoA. It participates in lipid metabolism; malonyl-CoA biosynthesis; malonyl-CoA from acetyl-CoA: step 1/1. In terms of biological role, component of the acetyl coenzyme A carboxylase (ACC) complex. First, biotin carboxylase catalyzes the carboxylation of biotin on its carrier protein (BCCP) and then the CO(2) group is transferred by the carboxyltransferase to acetyl-CoA to form malonyl-CoA. In Acinetobacter baumannii (strain ACICU), this protein is Acetyl-coenzyme A carboxylase carboxyl transferase subunit alpha.